The primary structure comprises 314 residues: Testisin (314 aa).

The signal sequence occupies residues 1 to 19; that stretch reads MGARGALLLALLLARAGLR. The propeptide occupies 20 to 41; that stretch reads KPESQEAAPLSGPCGRRVITSR. 2 disulfides stabilise this stretch: cysteine 33-cysteine 157 and cysteine 67-cysteine 83. Residues 42-286 form the Peptidase S1 domain; it reads IVGGEDAELG…HFEWIQKLMA (245 aa). Active-site charge relay system residues include histidine 82 and aspartate 137. 2 N-linked (GlcNAc...) asparagine glycosylation sites follow: asparagine 167 and asparagine 200. Disulfide bonds link cysteine 171–cysteine 244, cysteine 204–cysteine 223, and cysteine 234–cysteine 262. Catalysis depends on serine 238, which acts as the Charge relay system. The N-linked (GlcNAc...) asparagine glycan is linked to asparagine 273. Serine 288 carries GPI-anchor amidated serine lipidation. The propeptide at 289–314 is removed in mature form; that stretch reads GMSQPDPSWPLLFFPLLWALPLLGPV.

It belongs to the peptidase S1 family. As to expression, expressed predominantly in premeiotic testicular germ cells, mostly late pachytene and diplotene spermatocytes.

It localises to the cell membrane. Could regulate proteolytic events associated with testicular germ cell maturation. In Homo sapiens (Human), this protein is Testisin (PRSS21).